The following is a 61-amino-acid chain: Large ribosomal subunit protein bL28 (61 aa).

The protein belongs to the bacterial ribosomal protein bL28 family.

The sequence is that of Large ribosomal subunit protein bL28 from Geobacillus thermodenitrificans (strain NG80-2).